A 380-amino-acid polypeptide reads, in one-letter code: Capsular polysaccharide biosynthesis glycosyltransferase CapM (380 aa).

The protein belongs to the glycosyltransferase group 1 family. Glycosyltransferase 4 subfamily.

It functions in the pathway capsule biogenesis; capsule polysaccharide biosynthesis. Required for the biosynthesis of type 1 capsular polysaccharide. The sequence is that of Capsular polysaccharide biosynthesis glycosyltransferase CapM (capM) from Staphylococcus aureus.